The sequence spans 503 residues: Cytochrome P450 714C1 (503 aa).

Residues 1 to 6 are Lumenal-facing; the sequence is MEKLLA. A helical; Signal-anchor for type III membrane protein membrane pass occupies residues 7–27; that stretch reads LIVVLVILLSLALFYLCNILW. The Cytoplasmic portion of the chain corresponds to 28-503; that stretch reads LRAVKIRKKL…GLPLMVTKLP (476 aa). Cys-450 provides a ligand contact to heme.

Belongs to the cytochrome P450 family. Requires heme as cofactor.

The protein localises to the membrane. In terms of biological role, probably not involved in gibberellin metabolism since over-expression of CYP714C1 in a heterologous system does not induce semi-dwarfism. The polypeptide is Cytochrome P450 714C1 (CYP714C1) (Oryza sativa subsp. japonica (Rice)).